The chain runs to 533 residues: Spindle pole body protein CSA6 (533 aa).

2 disordered regions span residues Met1 to Thr32 and Asp53 to Glu130. 2 stretches are compositionally biased toward basic and acidic residues: residues Pro18–Asp30 and Asp53–Pro68. Low complexity predominate over residues Pro83 to Pro94. Over residues Ser103–Asn121 the composition is skewed to polar residues. The stretch at Lys136–Asp236 forms a coiled coil. The span at Glu309–Thr318 shows a compositional bias: basic and acidic residues. Disordered regions lie at residues Glu309–Ala329 and Ser349–Lys453. Composition is skewed to polar residues over residues Ser349–Gln392 and Ile405–His421. Residues Pro432 to Ser445 show a composition bias toward basic and acidic residues.

It localises to the cytoplasm. It is found in the cytoskeleton. Its subcellular location is the microtubule organizing center. The protein localises to the spindle pole body. Its function is as follows. Plays a role in mitotic spindle pole body organization, possibly at the point of spindle pole body separation. Required for mitotic exit. This chain is Spindle pole body protein CSA6, found in Candida dubliniensis (strain CD36 / ATCC MYA-646 / CBS 7987 / NCPF 3949 / NRRL Y-17841) (Yeast).